The following is a 502-amino-acid chain: MRIGFDHEKYLEEQSKYILERVNNYDKLYLEFGGKLLFDLHAKRVLPGFDENAKIKLLHKLKEKVEIIICLYAGDIERNKIRGDFGITYDVDVLRLIDDLRGYDLEVNSVVITRYSGQPATNIFINKLERRGIKVYKHEATKGYPTDVDTIVSDEGYGKNPYIETTKPIVVVTAPGPGSGKLATCLSQLYHEYKRGNVAGYSKFETFPVWNVPLKHPLNIAYESATVDLKDVNMIDSFHFDAYNKVAVNYNRDIESFPVLKRIIEKITGEESVYKSPTDMGVNRVGFGIVDDEVVKEASKQEIIRRAFKTACEYKKGYVDKETFHRAKLIMEEMNLKEEDRKVVIPARKYAAKLKERANKSETCTVVALELEDGTILTGRSSELMDGTAAVILNAVKHYANISDEIHLISPVILEPIINLKVKTLGSKRTALSCEEVLIALSICAATNPTAQVAMCKLPMLKGCQAHSTTILSTNEEQTFRKLGIDVTCDPEYISESLYYNN.

This sequence belongs to the UPF0371 family.

The polypeptide is UPF0371 protein CLB_0371 (Clostridium botulinum (strain ATCC 19397 / Type A)).